The sequence spans 1296 residues: DNA-directed RNA polymerase subunit beta' (1296 aa).

C60, C62, C75, and C78 together coordinate Zn(2+). The segment covering 185-202 has biased composition (basic and acidic residues); sequence EEEGGKAAEKRKLRDSAD. A disordered region spans residues 185–204; that stretch reads EEEGGKAAEKRKLRDSADRQ. Mg(2+) contacts are provided by D535, D537, and D539. 4 residues coordinate Zn(2+): C877, C954, C961, and C964.

It belongs to the RNA polymerase beta' chain family. The RNAP catalytic core consists of 2 alpha, 1 beta, 1 beta' and 1 omega subunit. When a sigma factor is associated with the core the holoenzyme is formed, which can initiate transcription. It depends on Mg(2+) as a cofactor. Zn(2+) is required as a cofactor.

The catalysed reaction is RNA(n) + a ribonucleoside 5'-triphosphate = RNA(n+1) + diphosphate. DNA-dependent RNA polymerase catalyzes the transcription of DNA into RNA using the four ribonucleoside triphosphates as substrates. This Kocuria rhizophila (strain ATCC 9341 / DSM 348 / NBRC 103217 / DC2201) protein is DNA-directed RNA polymerase subunit beta'.